Consider the following 787-residue polypeptide: Penicillin-binding protein 1A (787 aa).

The Cytoplasmic portion of the chain corresponds to 1 to 6 (MYKSLF). A helical; Signal-anchor for type II membrane protein transmembrane segment spans residues 7–27 (LCLKIFAVLILIGCSVTAYII). Residues 28–787 (YHYSHDLPDY…GMLDQSQEIY (760 aa)) lie on the Periplasmic side of the membrane. The tract at residues 49–220 (TRIYSRDGKL…SELNPDKNYS (172 aa)) is transglycosylase. Residue glutamate 87 is the Proton donor; for transglycosylase activity of the active site. The interval 398 to 711 (DVIVVEPIKD…SNVVLPIFID (314 aa)) is transpeptidase. Residue serine 457 is the Acyl-ester intermediate; for transpeptidase activity of the active site.

This sequence in the N-terminal section; belongs to the glycosyltransferase 51 family. It in the C-terminal section; belongs to the transpeptidase family.

It localises to the cell inner membrane. It carries out the reaction [GlcNAc-(1-&gt;4)-Mur2Ac(oyl-L-Ala-gamma-D-Glu-L-Lys-D-Ala-D-Ala)](n)-di-trans,octa-cis-undecaprenyl diphosphate + beta-D-GlcNAc-(1-&gt;4)-Mur2Ac(oyl-L-Ala-gamma-D-Glu-L-Lys-D-Ala-D-Ala)-di-trans,octa-cis-undecaprenyl diphosphate = [GlcNAc-(1-&gt;4)-Mur2Ac(oyl-L-Ala-gamma-D-Glu-L-Lys-D-Ala-D-Ala)](n+1)-di-trans,octa-cis-undecaprenyl diphosphate + di-trans,octa-cis-undecaprenyl diphosphate + H(+). It catalyses the reaction Preferential cleavage: (Ac)2-L-Lys-D-Ala-|-D-Ala. Also transpeptidation of peptidyl-alanyl moieties that are N-acyl substituents of D-alanine.. It participates in cell wall biogenesis; peptidoglycan biosynthesis. In terms of biological role, cell wall formation. Synthesis of cross-linked peptidoglycan from the lipid intermediates. The enzyme has a penicillin-insensitive transglycosylase N-terminal domain (formation of linear glycan strands) and a penicillin-sensitive transpeptidase C-terminal domain (cross-linking of the peptide subunits). In Rickettsia prowazekii (strain Madrid E), this protein is Penicillin-binding protein 1A (mrcA).